Here is a 36-residue protein sequence, read N- to C-terminus: Potassium channel toxin alpha-KTx 23.1 (36 aa).

Disulfide bonds link C6–C26, C12–C31, C16–C33, and C21–C36. C36 is modified (cysteine amide).

Belongs to the short scorpion toxin superfamily. Potassium channel inhibitor family. Alpha-KTx 23 subfamily. Expressed by the venom gland.

The protein localises to the secreted. Voltage-gated potassium channel inhibitor. Selectively and irreversibly binds (K(d)=2.9 pM) and blocks hKv1.3/KCNA3 potassium channels of human T-lymphocytes. Weakly blocks hKCa3.1/KCNN4, mKv1.1/KCNA1, and hKv1.2/KCNA2 channels. In vivo, high doses (200 ug) produce no symptoms of intoxication when injected into mice. The chain is Potassium channel toxin alpha-KTx 23.1 from Vaejovis mexicanus smithi (Mexican scorpion).